The sequence spans 506 residues: Maturase K (506 aa).

It belongs to the intron maturase 2 family. MatK subfamily.

Its subcellular location is the plastid. It is found in the chloroplast. Its function is as follows. Usually encoded in the trnK tRNA gene intron. Probably assists in splicing its own and other chloroplast group II introns. This chain is Maturase K, found in Ocimum basilicum (Sweet basil).